A 198-amino-acid polypeptide reads, in one-letter code: Recombination protein RecR (198 aa).

Residues 57-72 (CSVCGHITENDPCYIC) form a C4-type zinc finger. Positions 80–175 (SVICVVEDDK…KVTRLAQGLS (96 aa)) constitute a Toprim domain.

It belongs to the RecR family.

Functionally, may play a role in DNA repair. It seems to be involved in an RecBC-independent recombinational process of DNA repair. It may act with RecF and RecO. This chain is Recombination protein RecR, found in Staphylococcus aureus (strain Mu3 / ATCC 700698).